We begin with the raw amino-acid sequence, 203 residues long: Small ribosomal subunit protein uS4 (203 aa).

The region spanning 93–153 (QRLDSVVYRL…EKSKNILPIQ (61 aa)) is the S4 RNA-binding domain.

The protein belongs to the universal ribosomal protein uS4 family. Part of the 30S ribosomal subunit. Contacts protein S5. The interaction surface between S4 and S5 is involved in control of translational fidelity.

One of the primary rRNA binding proteins, it binds directly to 16S rRNA where it nucleates assembly of the body of the 30S subunit. Its function is as follows. With S5 and S12 plays an important role in translational accuracy. The polypeptide is Small ribosomal subunit protein uS4 (Leuconostoc mesenteroides subsp. mesenteroides (strain ATCC 8293 / DSM 20343 / BCRC 11652 / CCM 1803 / JCM 6124 / NCDO 523 / NBRC 100496 / NCIMB 8023 / NCTC 12954 / NRRL B-1118 / 37Y)).